The primary structure comprises 420 residues: Odorant receptor 63a (420 aa).

The Cytoplasmic portion of the chain corresponds to 1-43; that stretch reads MYSPEEAAELKRRNYRSIREMIRLSYTVGFNLLDPSRCGQVLR. Residues 44–64 form a helical membrane-spanning segment; sequence IWTIVLSVSSLASLYGHWQML. Residues 65–76 are Extracellular-facing; sequence ARYIHDIPRIGE. The chain crosses the membrane as a helical span at residues 77–97; sequence TAGTALQFLTSIAKMWYFLFA. At 98 to 150 the chain is on the cytoplasmic side; it reads HRQIYELLRKARCHELLQKCELFERMSDLPVIKEIRQQVESTMNRYWASTRRQ. The helical transmembrane segment at 151–171 threads the bilayer; it reads ILIYLYSCICITTNYFINSFV. Topologically, residues 172–217 are extracellular; the sequence is INLYRYFTKPKGSYDIMLPLPSLYPAWEHKGLEFPYYHIQMYLETC. A helical membrane pass occupies residues 218–238; the sequence is SLYICGMCAVSFDGVFIVLCL. The Cytoplasmic portion of the chain corresponds to 239 to 296; that stretch reads HSVGLMRSLNQMVEQATSELVPPDRRVEYLRCCIYQYQRVANFATEVNNCFRHITFTQ. Residues 297 to 317 traverse the membrane as a helical segment; that stretch reads FLLSLFNWGLALFQMSVGLGN. An N-linked (GlcNAc...) asparagine glycan is attached at Asn-318. Residues 318–320 lie on the Extracellular side of the membrane; sequence NSS. A helical membrane pass occupies residues 321–341; it reads ITMIRMTMYLVAAGYQIVVYC. The Cytoplasmic portion of the chain corresponds to 342–387; the sequence is YNGQRFATASEEIANAFYQVRWYGESREFRHLIRMMLMRTNRGFRL. The chain crosses the membrane as a helical span at residues 388–408; the sequence is DVSWFMQMSLPTLMAMVRTSG. At 409–420 the chain is on the extracellular side; sequence QYFLLLQNVNQK.

It belongs to the insect chemoreceptor superfamily. Heteromeric odorant receptor channel (TC 1.A.69) family. Or63a subfamily. As to quaternary structure, interacts with Orco. Complexes exist early in the endomembrane system in olfactory sensory neurons (OSNs), coupling these complexes to the conserved ciliary trafficking pathway.

The protein localises to the cell membrane. Odorant receptor which mediates acceptance or avoidance behavior, depending on its substrates. The odorant receptor repertoire encodes a large collection of odor stimuli that vary widely in identity, intensity, and duration. May form a complex with Orco to form odorant-sensing units, providing sensitive and prolonged odorant signaling and calcium permeability. Involved in the behavioral responses to butyl acetate, isoamyl acetate, and hexanoic acid. The sequence is that of Odorant receptor 63a (Or63a) from Drosophila melanogaster (Fruit fly).